The sequence spans 103 residues: Large ribosomal subunit protein bL32m (103 aa).

The transit peptide at M1–L47 directs the protein to the mitochondrion. Residues C77, C80, C90, and C93 each contribute to the Zn(2+) site.

It belongs to the bacterial ribosomal protein bL32 family. Component of the mitochondrial large ribosomal subunit (mt-LSU). Mature yeast 74S mitochondrial ribosomes consist of a small (37S) and a large (54S) subunit. The 37S small subunit contains a 15S ribosomal RNA (15S mt-rRNA) and at least 32 different proteins. The 54S large subunit contains a 21S rRNA (21S mt-rRNA) and at least 45 different proteins. bL32m has a zinc binding site. MRPL32 precursor is processed by the m-AAA protease, which cleaves the N-terminal transit peptide. Cleavage by the m-AAA protease takes place prior to assembly into the large subunit, an essential step for mitochondrial ribosome (mitoribosome) assembly. Proper processing by the m-AAA protease is dependent on the zinc-binding region within the tightly folded C-terminal domain of MRPL32: zinc-dependent folding halts degradation initiated from the N-terminus and triggers the release of mature mrpl32.

It localises to the mitochondrion. In terms of biological role, component of the mitochondrial ribosome (mitoribosome), a dedicated translation machinery responsible for the synthesis of mitochondrial genome-encoded proteins, including at least some of the essential transmembrane subunits of the mitochondrial respiratory chain. The mitoribosomes are attached to the mitochondrial inner membrane and translation products are cotranslationally integrated into the membrane. The polypeptide is Large ribosomal subunit protein bL32m (mrpl32) (Schizosaccharomyces pombe (strain 972 / ATCC 24843) (Fission yeast)).